Reading from the N-terminus, the 180-residue chain is ATP synthase subunit b 2 (180 aa).

Residues 33–53 (IFWLLVTLVAIYFLLTRVALP) traverse the membrane as a helical segment.

Belongs to the ATPase B chain family. In terms of assembly, F-type ATPases have 2 components, F(1) - the catalytic core - and F(0) - the membrane proton channel. F(1) has five subunits: alpha(3), beta(3), gamma(1), delta(1), epsilon(1). F(0) has three main subunits: a(1), b(2) and c(10-14). The alpha and beta chains form an alternating ring which encloses part of the gamma chain. F(1) is attached to F(0) by a central stalk formed by the gamma and epsilon chains, while a peripheral stalk is formed by the delta and b chains.

It localises to the cell inner membrane. F(1)F(0) ATP synthase produces ATP from ADP in the presence of a proton or sodium gradient. F-type ATPases consist of two structural domains, F(1) containing the extramembraneous catalytic core and F(0) containing the membrane proton channel, linked together by a central stalk and a peripheral stalk. During catalysis, ATP synthesis in the catalytic domain of F(1) is coupled via a rotary mechanism of the central stalk subunits to proton translocation. Its function is as follows. Component of the F(0) channel, it forms part of the peripheral stalk, linking F(1) to F(0). The b'-subunit is a diverged and duplicated form of b found in plants and photosynthetic bacteria. The protein is ATP synthase subunit b 2 (atpF2) of Cereibacter sphaeroides (strain ATCC 17025 / ATH 2.4.3) (Rhodobacter sphaeroides).